A 349-amino-acid polypeptide reads, in one-letter code: Thioredoxin reductase, mitochondrial (349 aa).

The transit peptide at 1-30 directs the protein to the mitochondrion; that stretch reads MLLVRNSTLGRLSSLRGFFRNINESNIFYR. Residues 41 to 44, 70 to 71, Gln-75, Asn-84, Val-117, Cys-175, Asp-318, and 325 to 327 each bind FAD; these read SGPA, IA, and RQA. Cys-172 and Cys-175 are joined by a disulfide.

The protein belongs to the class-II pyridine nucleotide-disulfide oxidoreductase family. As to quaternary structure, homodimer. FAD is required as a cofactor.

It localises to the mitochondrion. It catalyses the reaction [thioredoxin]-dithiol + NADP(+) = [thioredoxin]-disulfide + NADPH + H(+). The sequence is that of Thioredoxin reductase, mitochondrial (TRR1) from Kluyveromyces lactis (strain ATCC 8585 / CBS 2359 / DSM 70799 / NBRC 1267 / NRRL Y-1140 / WM37) (Yeast).